A 162-amino-acid chain; its full sequence is Ecotin (162 aa).

Positions Met-1 to Ala-18 are cleaved as a signal peptide. A disulfide bond links Cys-70 and Cys-107.

Belongs to the protease inhibitor I11 (ecotin) family. As to quaternary structure, homodimer.

Its subcellular location is the periplasm. Its function is as follows. General inhibitor of pancreatic serine proteases: inhibits chymotrypsin, trypsin, elastases, factor X, kallikrein as well as a variety of other proteases. The chain is Ecotin from Salmonella choleraesuis (strain SC-B67).